The sequence spans 876 residues: Phosphoenolpyruvate carboxylase (876 aa).

Active-site residues include histidine 138 and lysine 543.

Belongs to the PEPCase type 1 family. Requires Mg(2+) as cofactor.

It catalyses the reaction oxaloacetate + phosphate = phosphoenolpyruvate + hydrogencarbonate. Functionally, forms oxaloacetate, a four-carbon dicarboxylic acid source for the tricarboxylic acid cycle. This is Phosphoenolpyruvate carboxylase from Aliivibrio salmonicida (strain LFI1238) (Vibrio salmonicida (strain LFI1238)).